Consider the following 293-residue polypeptide: Methylsterol monooxygenase 1 (293 aa).

A run of 2 helical transmembrane segments spans residues 55–75 (LIVH…FQFI) and 100–120 (GILF…YYFT). Residues 144-274 (GCAVIEDTWH…FTWWDRIFGT (131 aa)) enclose the Fatty acid hydroxylase domain. The Histidine box-1 motif lies at 157 to 161 (HRLLH). A Histidine box-2 motif is present at residues 170-174 (HKVHH). A helical membrane pass occupies residues 199–219 (FFIGIVLLCDHVILLWAWVTM). Positions 249-255 (HHDFHHM) match the Histidine box-3 motif.

The protein belongs to the sterol desaturase family. Fe cation serves as cofactor. Post-translationally, ubiquitinated by MARCHF6, leading to proteasomal degradation.

It localises to the endoplasmic reticulum membrane. It catalyses the reaction 4,4-dimethyl-5alpha-cholest-7-en-3beta-ol + 6 Fe(II)-[cytochrome b5] + 3 O2 + 5 H(+) = 4alpha-carboxy-4beta-methyl-5alpha-cholest-7-ene-3beta-ol + 6 Fe(III)-[cytochrome b5] + 4 H2O. The enzyme catalyses 4,4-dimethyl-5alpha-cholesta-8,24-dien-3beta-ol + 6 Fe(II)-[cytochrome b5] + 3 O2 + 5 H(+) = 4beta-methylzymosterol-4alpha-carboxylate + 6 Fe(III)-[cytochrome b5] + 4 H2O. It carries out the reaction 4alpha-methylzymosterol + 6 Fe(II)-[cytochrome b5] + 3 O2 + 5 H(+) = 4alpha-carboxyzymosterol + 6 Fe(III)-[cytochrome b5] + 4 H2O. The catalysed reaction is 4alpha-methyl-5alpha-cholest-7-en-3beta-ol + 6 Fe(II)-[cytochrome b5] + 3 O2 + 5 H(+) = 4alpha-carboxy-5alpha-cholest-7-en-3beta-ol + 6 Fe(III)-[cytochrome b5] + 4 H2O. It catalyses the reaction 4,4-dimethyl-5alpha-cholest-8-en-3beta-ol + 6 Fe(II)-[cytochrome b5] + 3 O2 + 5 H(+) = 4alpha-carboxy-4beta-methyl-5alpha-cholest-8-en-3beta-ol + 6 Fe(III)-[cytochrome b5] + 4 H2O. The enzyme catalyses 4alpha-methyl-5alpha-cholest-8-en-3beta-ol + 6 Fe(II)-[cytochrome b5] + 3 O2 + 5 H(+) = 4alpha-carboxy-5alpha-cholest-8-ene-3beta-ol + 6 Fe(III)-[cytochrome b5] + 4 H2O. The protein operates within steroid biosynthesis; zymosterol biosynthesis; zymosterol from lanosterol: step 3/6. It participates in steroid biosynthesis; cholesterol biosynthesis. In terms of biological role, catalyzes the three-step monooxygenation required for the demethylation of 4,4-dimethyl and 4alpha-methylsterols, which can be subsequently metabolized to cholesterol. The polypeptide is Methylsterol monooxygenase 1 (Msmo1) (Rattus norvegicus (Rat)).